A 426-amino-acid polypeptide reads, in one-letter code: Enolase (426 aa).

Q163 serves as a coordination point for (2R)-2-phosphoglycerate. Catalysis depends on E205, which acts as the Proton donor. Mg(2+) contacts are provided by D242, E285, and D312. (2R)-2-phosphoglycerate is bound by residues K337, R366, S367, and K388. Catalysis depends on K337, which acts as the Proton acceptor.

This sequence belongs to the enolase family. The cofactor is Mg(2+).

The protein resides in the cytoplasm. It localises to the secreted. The protein localises to the cell surface. It carries out the reaction (2R)-2-phosphoglycerate = phosphoenolpyruvate + H2O. It functions in the pathway carbohydrate degradation; glycolysis; pyruvate from D-glyceraldehyde 3-phosphate: step 4/5. Its function is as follows. Catalyzes the reversible conversion of 2-phosphoglycerate (2-PG) into phosphoenolpyruvate (PEP). It is essential for the degradation of carbohydrates via glycolysis. In Rhodospirillum centenum (strain ATCC 51521 / SW), this protein is Enolase.